Here is a 200-residue protein sequence, read N- to C-terminus: Nucleoplasmin (200 aa).

Position 2 is an N-acetylalanine (Ala-2). Ser-3 bears the Phosphoserine mark. Residue Thr-4 is modified to Phosphothreonine. Ser-6 is modified (phosphoserine). Thr-8 is subject to Phosphothreonine. The segment at 35–39 (EDDEE) is acidic tract A1. The segment covering 123–148 (DYSWAEEEDEGEAEGEEEEEEEEDQE) has biased composition (acidic residues). The segment at 123-200 (DYSWAEEEDE…GRGRKPAAKK (78 aa)) is disordered. Positions 128–148 (EEEDEGEAEGEEEEEEEEDQE) are acidic tract A2. Ser-149 carries the post-translational modification Phosphoserine. Positions 153-170 (AVKRPAATKKAGQAKKKK) are enriched in basic residues. The short motif at 155–170 (KRPAATKKAGQAKKKK) is the Bipartite nuclear localization signal element. The interval 174-176 (EDE) is acidic tract A3. Residues Ser-177, Ser-178, and Ser-182 each carry the phosphoserine modification. The span at 185-200 (KKGKGAGRGRKPAAKK) shows a compositional bias: basic residues. Position 192 is an omega-N-methylarginine; by PRMT5; alternate (Arg-192). Position 192 is a symmetric dimethylarginine; by PRMT5; alternate (Arg-192).

It belongs to the nucleoplasmin family. Homopentamer, when bound to H2A-H2B dimers only. Homodecamer of two stacked pentamers, when bound to H2A-H2B dimers and H3-H4 tetramers simultaneously. Interacts with the heterotetramer formed by wdr77 and prmt5. Post-translationally, activated by phosphorylation of multiple serine/threonine residues, along both core and tail domains. The level of phosphorylation gradually increases during egg maturation, reaching an average of 7-10 phosphates per monomer, so that at the time of fertilization the activity of the protein is maximum. Methylated by prmt5, yielding both monomethylated and symmetrically dimethylated Arg-192.

It localises to the nucleus. Its function is as follows. Acts as a chaperone for histones, such as histone H2A-H2B, and thus regulates the assembly of nucleosome cores. Involved in chromatin remodeling, especially during fertilization and early embryonic development. May be involved in sperm chromatin decondensation during fertilization. In Xenopus laevis (African clawed frog), this protein is Nucleoplasmin.